The primary structure comprises 169 residues: Cell division inhibitor SulA (169 aa).

The span at 1-13 (MFTSAHANRSAQA) shows a compositional bias: polar residues. Residues 1 to 26 (MFTSAHANRSAQASAPAGHYAHRSGE) form a disordered region. A ftsZ binding region spans residues 106 to 112 (ALRTGNY). The lon protease binding stretch occupies residues 162–169 (KIHSNLYH).

It belongs to the SulA family. As to quaternary structure, interacts with FtsZ. Post-translationally, is rapidly cleaved and degraded by the Lon protease once DNA damage is repaired.

Its function is as follows. Component of the SOS system and an inhibitor of cell division. Accumulation of SulA causes rapid cessation of cell division and the appearance of long, non-septate filaments. In the presence of GTP, binds a polymerization-competent form of FtsZ in a 1:1 ratio, thus inhibiting FtsZ polymerization and therefore preventing it from participating in the assembly of the Z ring. This mechanism prevents the premature segregation of damaged DNA to daughter cells during cell division. This is Cell division inhibitor SulA from Klebsiella pneumoniae subsp. pneumoniae (strain ATCC 700721 / MGH 78578).